A 219-amino-acid polypeptide reads, in one-letter code: Ribose-5-phosphate isomerase A (219 aa).

Substrate-binding positions include serine 28–threonine 31, aspartate 81–aspartate 84, and lysine 94–glycine 97. Glutamate 103 functions as the Proton acceptor in the catalytic mechanism. Residue lysine 121 coordinates substrate.

Belongs to the ribose 5-phosphate isomerase family. In terms of assembly, homodimer.

It catalyses the reaction aldehydo-D-ribose 5-phosphate = D-ribulose 5-phosphate. The protein operates within carbohydrate degradation; pentose phosphate pathway; D-ribose 5-phosphate from D-ribulose 5-phosphate (non-oxidative stage): step 1/1. Its function is as follows. Catalyzes the reversible conversion of ribose-5-phosphate to ribulose 5-phosphate. The polypeptide is Ribose-5-phosphate isomerase A (Histophilus somni (strain 2336) (Haemophilus somnus)).